Here is a 191-residue protein sequence, read N- to C-terminus: MAP6 domain-containing protein 1 (191 aa).

S-palmitoyl cysteine attachment occurs at residues C5, C10, and C11. The tract at residues 31–106 (HGYSDPGSEE…RGQSSAPPTR (76 aa)) is disordered. Phosphoserine occurs at positions 38 and 41. Mn stretches follow at residues 123–136 (TTSY…WTGV) and 158–170 (DPSP…VPEV). A Phosphoserine modification is found at S160.

It belongs to the STOP family. Interacts with calmodulin. In terms of processing, palmitoylated. Palmitoylation enhances association with microtubules. As to expression, expressed in brain. Found in neurons in primary cultures, but absent in glial cells.

It is found in the golgi apparatus. The protein localises to the cytoplasm. Its subcellular location is the cytoskeleton. May have microtubule-stabilizing activity. In Mus musculus (Mouse), this protein is MAP6 domain-containing protein 1 (Map6d1).